Consider the following 100-residue polypeptide: Large ribosomal subunit protein bL21 (100 aa).

It belongs to the bacterial ribosomal protein bL21 family. Part of the 50S ribosomal subunit. Contacts protein L20.

This protein binds to 23S rRNA in the presence of protein L20. In Wolbachia pipientis wMel, this protein is Large ribosomal subunit protein bL21.